The following is an 879-amino-acid chain: Band 4.1-like protein 1 (879 aa).

A disordered region spans residues 1–88; that stretch reads MTTETGPDSE…TPSKAQKSPQ (88 aa). The span at 17–35 shows a compositional bias: low complexity; it reads ETPQQPEAAAAVTTPVTPA. Phosphothreonine is present on threonine 30. A compositionally biased stretch (basic and acidic residues) spans 38-50; that stretch reads SHPETNSNEKHLT. Serine 75 carries the phosphoserine modification. Over residues 76–87 the composition is skewed to polar residues; the sequence is ERTTPSKAQKSP. Phosphothreonine is present on threonine 79. The region spanning 97-378 is the FERM domain; it reads AICRVTLLDA…EHHTFFRLVS (282 aa). Position 343 is a phosphotyrosine (tyrosine 343). Phosphoserine is present on residues serine 378, serine 430, serine 437, serine 461, and serine 466. The interval 381–482 is hydrophilic; that stretch reads PPPKGFLVMG…VRTPTKIKEL (102 aa). The interval 428-501 is disordered; the sequence is SRSLDGAEFS…HKQEFLDKPE (74 aa). A compositionally biased stretch (basic and acidic residues) spans 444-501; that stretch reads ENHDAGPEGDKREDDAESGGRRSEAEEGEVRTPTKIKELKPEQETTPRHKQEFLDKPE. Threonine 475 is subject to Phosphothreonine. The tract at residues 483–541 is spectrin--actin-binding; the sequence is KPEQETTPRHKQEFLDKPEDVLLKHQASINELKRTLKEPNSKLIHRDRDWDRERRLPSS. At serine 510 the chain carries Phosphoserine. Basic and acidic residues predominate over residues 514-538; that stretch reads LKRTLKEPNSKLIHRDRDWDRERRL. The disordered stretch occupies residues 514–594; that stretch reads LKRTLKEPNS…QDQERDAVFL (81 aa). 4 positions are modified to phosphoserine: serine 540, serine 541, serine 544, and serine 546. Threonine 550 carries the phosphothreonine modification. Basic and acidic residues predominate over residues 550-577; that stretch reads TPEKASERAGLREGSEEKVKPPRPRAPE. Residues serine 564, serine 578, serine 639, serine 648, serine 650, serine 665, serine 666, serine 671, serine 677, and serine 684 each carry the phosphoserine modification. Residues 657–696 are disordered; it reads FAQDLKGPSSQEDESGGLEDSPDRGACSTPEMPQFESVKA. Threonine 685 carries the post-translational modification Phosphothreonine. 3 positions are modified to phosphoserine: serine 721, serine 782, and serine 868. Residues 743–879 are C-terminal (CTD); that stretch reads PCITTETIST…EERDKKPQES (137 aa).

Interacts with AGAP2. Highest expression in brain, also present in kidney, olfactory epithelium, retina, sensory ganglia, gastrointestinal tract (only enteric neurons) and lung.

The protein resides in the cytoplasm. Its subcellular location is the cytoskeleton. Its function is as follows. May function to confer stability and plasticity to neuronal membrane via multiple interactions, including the spectrin-actin-based cytoskeleton, integral membrane channels and membrane-associated guanylate kinases. The sequence is that of Band 4.1-like protein 1 from Mus musculus (Mouse).